Reading from the N-terminus, the 217-residue chain is Somatotropin (217 aa).

Positions 1 to 27 are cleaved as a signal peptide; it reads MATGSHTATLLLAVALLGLPWPQEAGA. His-46 serves as a coordination point for Zn(2+). The cysteines at positions 79 and 190 are disulfide-linked. Phosphoserine is present on Ser-132. Position 199 (Glu-199) interacts with Zn(2+). Cys-207 and Cys-215 are oxidised to a cystine.

The protein belongs to the somatotropin/prolactin family.

It localises to the secreted. Functionally, plays an important role in growth control. Its major role in stimulating body growth is to stimulate the liver and other tissues to secrete IGF1. It stimulates both the differentiation and proliferation of myoblasts. It also stimulates amino acid uptake and protein synthesis in muscle and other tissues. This is Somatotropin (GH1) from Xanthonycticebus pygmaeus (Pygmy slow loris).